The following is a 313-amino-acid chain: HTH-type transcriptional regulator CysB (313 aa).

The HTH lysR-type domain maps to 1 to 59 (MNLHQFRFVREAVRQNFNLTEAAKALYTSQPGVSKAIIELEDELGVEIFTRHGKRVRSL). The H-T-H motif DNA-binding region spans 19-38 (LTEAAKALYTSQPGVSKAII).

Belongs to the LysR transcriptional regulatory family.

Its function is as follows. Transcriptional regulator preferentially involved in the control of sulfate transport and reduction. Binds to DNA at target promoter regions. In Burkholderia cenocepacia (strain ATCC BAA-245 / DSM 16553 / LMG 16656 / NCTC 13227 / J2315 / CF5610) (Burkholderia cepacia (strain J2315)), this protein is HTH-type transcriptional regulator CysB.